A 199-amino-acid polypeptide reads, in one-letter code: dTTP/UTP pyrophosphatase (199 aa).

Aspartate 78 (proton acceptor) is an active-site residue.

The protein belongs to the Maf family. YhdE subfamily. It depends on a divalent metal cation as a cofactor.

The protein localises to the cytoplasm. It catalyses the reaction dTTP + H2O = dTMP + diphosphate + H(+). The enzyme catalyses UTP + H2O = UMP + diphosphate + H(+). Its function is as follows. Nucleoside triphosphate pyrophosphatase that hydrolyzes dTTP and UTP. May have a dual role in cell division arrest and in preventing the incorporation of modified nucleotides into cellular nucleic acids. This chain is dTTP/UTP pyrophosphatase, found in Clostridium acetobutylicum (strain ATCC 824 / DSM 792 / JCM 1419 / IAM 19013 / LMG 5710 / NBRC 13948 / NRRL B-527 / VKM B-1787 / 2291 / W).